The following is a 177-amino-acid chain: Basic form of pathogenesis-related protein 1 (177 aa).

The N-terminal stretch at Met1 to Ala23 is a signal peptide. Pyrrolidone carboxylic acid is present on Gln24. Positions Leu31–Tyr147 constitute an SCP domain.

This sequence belongs to the CRISP family. In terms of processing, two disulfide bonds are present.

In terms of biological role, probably involved in the defense reaction of plants against pathogens. The chain is Basic form of pathogenesis-related protein 1 from Nicotiana tabacum (Common tobacco).